We begin with the raw amino-acid sequence, 473 residues long: Putative sulfoquinovose importer (473 aa).

A run of 11 helical transmembrane segments spans residues 18–38, 45–65, 88–108, 110–130, 160–180, 187–207, 239–259, 276–296, 317–337, 380–400, and 415–435; these read AYGVGDFGSNLMLCIGTLYLL, LGMPAYYGGIIFLVAKFFTAF, PFILYASFPVALVATAQFFAT, FTLPVKTAFATVLFMLFGLFY, GGATIGLLLCTVGFMPIQALF, GYLIAAVIFSVCGLFSMWWCF, LLVLCVANLCTLAAFNIKLAI, WMGFFSMGCILIGVLLVPAAV, ILNFIWGGTSFLFVIFSCIAF, ISAALAGFLPGIMLTQIGYIP, and LIFLWPCGLAIIAALTMGFFY.

Belongs to the sodium:galactoside symporter (TC 2.A.2) family.

Its subcellular location is the cell inner membrane. In terms of biological role, could be involved in sulfoquinovose import. The chain is Putative sulfoquinovose importer (yihO) from Salmonella typhimurium (strain LT2 / SGSC1412 / ATCC 700720).